A 217-amino-acid chain; its full sequence is Small ribosomal subunit protein uS3 (217 aa).

The region spanning 40–110 (IRDLINKGFN…EVYINIHEVR (71 aa)) is the KH type-2 domain.

The protein belongs to the universal ribosomal protein uS3 family. In terms of assembly, part of the 30S ribosomal subunit. Forms a tight complex with proteins S10 and S14.

Its function is as follows. Binds the lower part of the 30S subunit head. Binds mRNA in the 70S ribosome, positioning it for translation. This is Small ribosomal subunit protein uS3 from Rickettsia felis (strain ATCC VR-1525 / URRWXCal2) (Rickettsia azadi).